The chain runs to 197 residues: Methylamine utilization protein MauD (197 aa).

Residues 3-23 form a helical membrane-spanning segment; sequence FLIASNILLWIAFLGVTVVML. Positions 48–180 constitute a Thioredoxin domain; sequence PDIGDMAPEF…LESLLEADKT (133 aa).

The protein localises to the membrane. The protein operates within one-carbon metabolism; methylamine degradation. May be specifically involved in the processing, transport, and/or maturation of the MADH beta-subunit. The chain is Methylamine utilization protein MauD (mauD) from Paracoccus versutus (Thiobacillus versutus).